A 533-amino-acid polypeptide reads, in one-letter code: Glycogen synthase (533 aa).

Position 12 (lysine 12) interacts with ADP-alpha-D-glucose. A disordered region spans residues 497 to 533; that stretch reads AALARADAASGRRRRAPEQSERLRQERLARQVALASK. A compositionally biased stretch (basic and acidic residues) spans 512-525; that stretch reads APEQSERLRQERLA.

It belongs to the glycosyltransferase 1 family. Bacterial/plant glycogen synthase subfamily.

The enzyme catalyses [(1-&gt;4)-alpha-D-glucosyl](n) + ADP-alpha-D-glucose = [(1-&gt;4)-alpha-D-glucosyl](n+1) + ADP + H(+). It participates in glycan biosynthesis; glycogen biosynthesis. Its function is as follows. Synthesizes alpha-1,4-glucan chains using ADP-glucose. The protein is Glycogen synthase of Burkholderia thailandensis (strain ATCC 700388 / DSM 13276 / CCUG 48851 / CIP 106301 / E264).